We begin with the raw amino-acid sequence, 186 residues long: Probable chorismate pyruvate-lyase (186 aa).

Substrate is bound by residues Arg80, Leu118, and Glu170.

This sequence belongs to the UbiC family.

The protein localises to the cytoplasm. It catalyses the reaction chorismate = 4-hydroxybenzoate + pyruvate. It participates in cofactor biosynthesis; ubiquinone biosynthesis. In terms of biological role, removes the pyruvyl group from chorismate, with concomitant aromatization of the ring, to provide 4-hydroxybenzoate (4HB) for the ubiquinone pathway. The polypeptide is Probable chorismate pyruvate-lyase (Pseudomonas syringae pv. tomato (strain ATCC BAA-871 / DC3000)).